A 329-amino-acid polypeptide reads, in one-letter code: Vanillate O-demethylase oxygenase subunit (329 aa).

In terms of domain architecture, Rieske spans 1–84; sequence MICNERMVIY…AQERHGFIWV (84 aa). [2Fe-2S] cluster is bound by residues Cys24, His26, Cys43, and His46.

The protein belongs to the bacterial ring-hydroxylating dioxygenase alpha subunit family. This demethylase system consists of two proteins: an oxygenase and an oxygenase reductase. The cofactor is [2Fe-2S] cluster. Fe cation serves as cofactor.

It carries out the reaction vanillate + NADH + O2 + H(+) = 3,4-dihydroxybenzoate + formaldehyde + NAD(+) + H2O. The protein operates within xenobiotic degradation; vanillyl-alcohol degradation. The polypeptide is Vanillate O-demethylase oxygenase subunit (vanA) (Pseudomonas sp. (strain ATCC 19151)).